The sequence spans 416 residues: Ribulose bisphosphate carboxylase large chain (416 aa).

The residue at position 5 (Lys5) is an N6,N6,N6-trimethyllysine. Substrate-binding residues include Asn114 and Thr164. The Proton acceptor role is filled by Lys166. Residue Lys168 coordinates substrate. Mg(2+) contacts are provided by Lys192, Asp194, and Glu195. Lys192 carries the N6-carboxylysine modification. His285 acts as the Proton acceptor in catalysis. Substrate-binding residues include Arg286, His318, and Ser370.

This sequence belongs to the RuBisCO large chain family. Type I subfamily. As to quaternary structure, heterohexadecamer of 8 large chains and 8 small chains; disulfide-linked. The disulfide link is formed within the large subunit homodimers. Requires Mg(2+) as cofactor. In terms of processing, the disulfide bond which can form in the large chain dimeric partners within the hexadecamer appears to be associated with oxidative stress and protein turnover.

The protein localises to the plastid. Its subcellular location is the chloroplast. It catalyses the reaction 2 (2R)-3-phosphoglycerate + 2 H(+) = D-ribulose 1,5-bisphosphate + CO2 + H2O. The enzyme catalyses D-ribulose 1,5-bisphosphate + O2 = 2-phosphoglycolate + (2R)-3-phosphoglycerate + 2 H(+). In terms of biological role, ruBisCO catalyzes two reactions: the carboxylation of D-ribulose 1,5-bisphosphate, the primary event in carbon dioxide fixation, as well as the oxidative fragmentation of the pentose substrate in the photorespiration process. Both reactions occur simultaneously and in competition at the same active site. The polypeptide is Ribulose bisphosphate carboxylase large chain (rbcL) (Spigelia marilandica (Woodland pinkroot)).